The primary structure comprises 126 residues: Holo-[acyl-carrier-protein] synthase (126 aa).

D9 and E58 together coordinate Mg(2+).

It belongs to the P-Pant transferase superfamily. AcpS family. Requires Mg(2+) as cofactor.

The protein resides in the cytoplasm. It catalyses the reaction apo-[ACP] + CoA = holo-[ACP] + adenosine 3',5'-bisphosphate + H(+). Functionally, transfers the 4'-phosphopantetheine moiety from coenzyme A to a Ser of acyl-carrier-protein. The polypeptide is Holo-[acyl-carrier-protein] synthase (Vibrio parahaemolyticus serotype O3:K6 (strain RIMD 2210633)).